A 657-amino-acid polypeptide reads, in one-letter code: Cyclic-di-AMP phosphodiesterase PdeA (657 aa).

2 consecutive transmembrane segments (helical) span residues 13 to 35 and 37 to 53; these read PLYG…SWWL and ALVV…MFYF. Positions 74-137 are PAS-like; the sequence is RSEEEALVEM…ITGNDEKGIM (64 aa). In terms of domain architecture, GGDEF spans 175–303; the sequence is NKSVFAVIFL…GGDQVVIKQP (129 aa). The DHH stretch occupies residues 342–498; the sequence is VFVMGHRYPD…IEATALLSGI (157 aa). Mn(2+) contacts are provided by His347, Asp351, Asp353, Asp422, His446, and Asp501. The segment at 592–645 is DHHA1; sequence VITLRPDKLIGISARSLGQINVQVIMEKLGGGGHLSNAATQLKDVTIAEAEKQL.

Belongs to the GdpP/PdeA phosphodiesterase family. The cofactor is heme b. Mn(2+) is required as a cofactor.

It localises to the cell membrane. The catalysed reaction is 3',3'-c-di-AMP + H2O = 5'-O-phosphonoadenylyl-(3'-&gt;5')-adenosine + H(+). Functionally, has phosphodiesterase (PDE) activity against cyclic-di-AMP (c-di-AMP). Overexpression decreases export of c-di-AMP, leads to slightly increased susceptibility to the antibiotic cefuroxime and somewhat slower growth in macrophages. There are at least 2 PDEs for c-di-AMP in this bacteria (this one and pgpH); this may be the major PDE for intracellular growth in host macrophages. During host infection c-di-AMP is secreted into the host cytoplasm which leads to interferon-beta production and secretion by the host. c-di-AMP is a second messenger that mediates growth, cell wall stability and virulence. May monitor cellular heme or NO levels. The chain is Cyclic-di-AMP phosphodiesterase PdeA from Listeria monocytogenes serotype 1/2a (strain 10403S).